The primary structure comprises 282 residues: Small ribosomal subunit protein uS3 (282 aa).

The KH type-2 domain maps to 43 to 111; it reads IRQLMSTGME…QVQLNILEVK (69 aa). Positions 218–282 are disordered; the sequence is QQAASAPSRG…AAVATEGSDA (65 aa). Residues 230-262 show a composition bias toward basic and acidic residues; sequence PRRDGDDRGPRRENSGPRRDGGNLRSQRNDRNE. Low complexity predominate over residues 263-276; the sequence is NAAVEAAPAAAAVA.

This sequence belongs to the universal ribosomal protein uS3 family. Part of the 30S ribosomal subunit. Forms a tight complex with proteins S10 and S14.

Binds the lower part of the 30S subunit head. Binds mRNA in the 70S ribosome, positioning it for translation. The sequence is that of Small ribosomal subunit protein uS3 from Renibacterium salmoninarum (strain ATCC 33209 / DSM 20767 / JCM 11484 / NBRC 15589 / NCIMB 2235).